A 174-amino-acid chain; its full sequence is Beta-lactoglobulin (174 aa).

A signal peptide spans 1 to 18 (MKFLLLTVGLTSICAIQA). 2 cysteine pairs are disulfide-bonded: C79–C172 and C122–C134.

This sequence belongs to the calycin superfamily. Lipocalin family. Monomer.

The protein localises to the secreted. Lactoglobulin is the primary component of whey, it binds retinol and is probably involved in the transport of that molecule. In Trichosurus vulpecula (Brush-tailed possum), this protein is Beta-lactoglobulin (LGB).